We begin with the raw amino-acid sequence, 217 residues long: Glyoxalase ElbB (217 aa).

Cys-135 acts as the Nucleophile in catalysis.

It belongs to the peptidase C56 family. As to quaternary structure, homodimer.

The enzyme catalyses glyoxal + H2O = glycolate + H(+). Its function is as follows. Displays glyoxalase activity, catalyzing the conversion of glyoxal to glycolate. However, this apparent glyoxalase activity may reflect a protein deglycase activity, which could be the primary function of this protein like other DJ-1 superfamily members such as PARK7, YajL, YhbO and HchA. Is not able to use methylglyoxal as substrate. The chain is Glyoxalase ElbB from Escherichia coli (strain K12).